A 296-amino-acid polypeptide reads, in one-letter code: Telomere repeat-binding factor 4 (296 aa).

Residues 1–62 (MGNQKLKWTA…WRNLSVAPGI (62 aa)) form the HTH myb-type domain. A DNA-binding region (H-T-H motif) is located at residues 28 to 58 (WKNILRDPELAEQLSSRSNIDLKDKWRNLSV). Residues 126 to 200 (NAPRYDGMIF…STQNFYKMND (75 aa)) form the H15 domain. The tract at residues 197–232 (KMNDNSLVQRTPHVARPKESNTKSRQQTNSQGPSIS) is disordered. Over residues 219-232 (KSRQQTNSQGPSIS) the composition is skewed to polar residues. The stretch at 245-282 (KLVEVENKLDVSKGAAEEIERLMKLAEEADEMLVIARE) forms a coiled coil.

The protein belongs to the histone H1/H5 family. SMH subfamily.

Its subcellular location is the nucleus. It is found in the chromosome. Binds preferentially double-stranded telomeric repeats. This chain is Telomere repeat-binding factor 4, found in Arabidopsis thaliana (Mouse-ear cress).